We begin with the raw amino-acid sequence, 155 residues long: 6,7-dimethyl-8-ribityllumazine synthase (155 aa).

Residues F23, 57 to 59, and 81 to 83 each bind 5-amino-6-(D-ribitylamino)uracil; these read AFE and AVI. Residue 86–87 participates in (2S)-2-hydroxy-3-oxobutyl phosphate binding; the sequence is ST. H89 acts as the Proton donor in catalysis. Residue F114 participates in 5-amino-6-(D-ribitylamino)uracil binding. R128 contacts (2S)-2-hydroxy-3-oxobutyl phosphate.

Belongs to the DMRL synthase family.

It catalyses the reaction (2S)-2-hydroxy-3-oxobutyl phosphate + 5-amino-6-(D-ribitylamino)uracil = 6,7-dimethyl-8-(1-D-ribityl)lumazine + phosphate + 2 H2O + H(+). The protein operates within cofactor biosynthesis; riboflavin biosynthesis; riboflavin from 2-hydroxy-3-oxobutyl phosphate and 5-amino-6-(D-ribitylamino)uracil: step 1/2. Functionally, catalyzes the formation of 6,7-dimethyl-8-ribityllumazine by condensation of 5-amino-6-(D-ribitylamino)uracil with 3,4-dihydroxy-2-butanone 4-phosphate. This is the penultimate step in the biosynthesis of riboflavin. This Dehalococcoides mccartyi (strain ATCC BAA-2100 / JCM 16839 / KCTC 5957 / BAV1) protein is 6,7-dimethyl-8-ribityllumazine synthase.